We begin with the raw amino-acid sequence, 196 residues long: Peptidyl-tRNA hydrolase (196 aa).

Tyr-18 serves as a coordination point for tRNA. His-23 (proton acceptor) is an active-site residue. Positions 69, 71, and 117 each coordinate tRNA.

Belongs to the PTH family. In terms of assembly, monomer.

The protein resides in the cytoplasm. The enzyme catalyses an N-acyl-L-alpha-aminoacyl-tRNA + H2O = an N-acyl-L-amino acid + a tRNA + H(+). Its function is as follows. Hydrolyzes ribosome-free peptidyl-tRNAs (with 1 or more amino acids incorporated), which drop off the ribosome during protein synthesis, or as a result of ribosome stalling. Catalyzes the release of premature peptidyl moieties from peptidyl-tRNA molecules trapped in stalled 50S ribosomal subunits, and thus maintains levels of free tRNAs and 50S ribosomes. This is Peptidyl-tRNA hydrolase from Marinobacter nauticus (strain ATCC 700491 / DSM 11845 / VT8) (Marinobacter aquaeolei).